The primary structure comprises 504 residues: UDP-N-acetylmuramoylalanine--D-glutamate ligase (504 aa).

129–135 (GTNGKTT) contributes to the ATP binding site.

This sequence belongs to the MurCDEF family.

It is found in the cytoplasm. It catalyses the reaction UDP-N-acetyl-alpha-D-muramoyl-L-alanine + D-glutamate + ATP = UDP-N-acetyl-alpha-D-muramoyl-L-alanyl-D-glutamate + ADP + phosphate + H(+). It participates in cell wall biogenesis; peptidoglycan biosynthesis. Cell wall formation. Catalyzes the addition of glutamate to the nucleotide precursor UDP-N-acetylmuramoyl-L-alanine (UMA). This chain is UDP-N-acetylmuramoylalanine--D-glutamate ligase, found in Cupriavidus metallidurans (strain ATCC 43123 / DSM 2839 / NBRC 102507 / CH34) (Ralstonia metallidurans).